Consider the following 440-residue polypeptide: MNDYHLEDTTSELEALRLENAQLREQLAKREDSSRDYPLSLEEYQRYGRQMIVEETGGVAGQVKLKNTRVLVVGAGGLGCPALPYLAGAGVGQIGIVDNDVVETSNLHRQVLHDSSRVGMLKCESARQYITKLNPHINVVTYPVRLNSSNAFDIFKGYNYILDCTDSPLTRYLVSDVAVNLGITVVSASGLGTEGQLTILNFNNIGPCYRCFYPTPPPPNAVTSCQEGGVIGPCIGLVGTMMAVETLKLILGIYTNENFSPFLMLYSGFPQQSLRTFKMRGRQEKCLCCGKNRTITKEAIEKGEINYELFCGARNYNVCEPDERISVDAFQRIYKDDEFLAKHIFLDVRPSHHYEISHFPEAVNIPIKNLRDMNGDLKKLQEKLPSVEKDSNIVILCRYGNDSQLATRLLKDKFGFSNVRDVRGGYFKYIDDIDQTIPKY.

N-acetylmethionine is present on M1. ATP is bound by residues G77, D98, 105–109 (SNLHR), K122, and 166–167 (DS). Zn(2+)-binding residues include C208 and C211. C225 serves as the catalytic Glycyl thioester intermediate; for adenylyltransferase activity. Positions 286 and 289 each coordinate Zn(2+). At S326 the chain carries Phosphoserine. The 100-residue stretch at 339–438 (FLAKHIFLDV…YIDDIDQTIP (100 aa)) folds into the Rhodanese domain. The active-site Cysteine persulfide intermediate; for sulfurtransferase activity is C397.

This sequence in the N-terminal section; belongs to the HesA/MoeB/ThiF family. UBA4 subfamily. The cofactor is Zn(2+).

Its subcellular location is the cytoplasm. It localises to the cytosol. It functions in the pathway tRNA modification; 5-methoxycarbonylmethyl-2-thiouridine-tRNA biosynthesis. In terms of biological role, plays a central role in 2-thiolation of mcm(5)S(2)U at tRNA wobble positions of cytosolic tRNA(Lys), tRNA(Glu) and tRNA(Gln). Acts by mediating the C-terminal thiocarboxylation of sulfur carrier URM1. Its N-terminus first activates URM1 as acyl-adenylate (-COAMP), then the persulfide sulfur on the catalytic cysteine is transferred to URM1 to form thiocarboxylation (-COSH) of its C-terminus. The reaction probably involves hydrogen sulfide that is generated from the persulfide intermediate and that acts as a nucleophile towards URM1. Subsequently, a transient disulfide bond is formed. Does not use thiosulfate as sulfur donor; NFS1 probably acting as a sulfur donor for thiocarboxylation reactions. Prior mcm(5) tRNA modification by the elongator complex is required for 2-thiolation. May also be involved in protein urmylation. The protein is Adenylyltransferase and sulfurtransferase UBA4 of Saccharomyces cerevisiae (strain YJM789) (Baker's yeast).